The sequence spans 289 residues: tRNA pseudouridine synthase B (289 aa).

The active-site Nucleophile is the Asp38.

It belongs to the pseudouridine synthase TruB family. Type 1 subfamily.

It carries out the reaction uridine(55) in tRNA = pseudouridine(55) in tRNA. Functionally, responsible for synthesis of pseudouridine from uracil-55 in the psi GC loop of transfer RNAs. The sequence is that of tRNA pseudouridine synthase B from Clostridium kluyveri (strain ATCC 8527 / DSM 555 / NBRC 12016 / NCIMB 10680 / K1).